We begin with the raw amino-acid sequence, 388 residues long: Pepsin A-4 (388 aa).

The N-terminal stretch at 1 to 15 is a signal peptide; sequence MKWLLLLGLVALSEC. Residues 16–62 constitute a propeptide, activation peptide; it reads IMYKVPLIRKKSLRRTLSERGLLKDFLKKHNLNPARKYFPQWEAPTL. One can recognise a Peptidase A1 domain in the interval 76-385; it reads YFGTIGIGTP…DRANNQVGLA (310 aa). The active site involves Asp94. Cysteines 107 and 112 form a disulfide. The residue at position 130 (Ser130) is a Phosphoserine. Cys268 and Cys272 form a disulfide bridge. Asp277 is an active-site residue. Cysteines 311 and 344 form a disulfide.

Belongs to the peptidase A1 family.

The protein localises to the secreted. The enzyme catalyses Preferential cleavage: hydrophobic, preferably aromatic, residues in P1 and P1' positions. Cleaves 1-Phe-|-Val-2, 4-Gln-|-His-5, 13-Glu-|-Ala-14, 14-Ala-|-Leu-15, 15-Leu-|-Tyr-16, 16-Tyr-|-Leu-17, 23-Gly-|-Phe-24, 24-Phe-|-Phe-25 and 25-Phe-|-Tyr-26 bonds in the B chain of insulin.. Its function is as follows. Shows particularly broad specificity; although bonds involving phenylalanine and leucine are preferred, many others are also cleaved to some extent. In Homo sapiens (Human), this protein is Pepsin A-4 (PGA4).